The sequence spans 374 residues: CC-adding tRNA nucleotidyltransferase (374 aa).

39–42 (GAVR) serves as a coordination point for CTP. Residues aspartate 52 and aspartate 54 each contribute to the Mg(2+) site. CTP is bound by residues 126–127 (RD), asparagine 131, 171–180 (DASRLVRAAR), and arginine 209.

The protein belongs to the tRNA nucleotidyltransferase/poly(A) polymerase family. Mg(2+) is required as a cofactor.

It carries out the reaction a tRNA precursor + 2 CTP = a tRNA with a 3' CC end + 2 diphosphate. Its function is as follows. tRNA nucleotidyltransferase involved in the synthesis of the tRNA CCA terminus. Adds the two cytidine residues to tRNA. The protein is CC-adding tRNA nucleotidyltransferase of Deinococcus radiodurans (strain ATCC 13939 / DSM 20539 / JCM 16871 / CCUG 27074 / LMG 4051 / NBRC 15346 / NCIMB 9279 / VKM B-1422 / R1).